The primary structure comprises 103 residues: Pyrimidine/purine nucleoside phosphorylase (103 aa).

It belongs to the nucleoside phosphorylase PpnP family.

It carries out the reaction a purine D-ribonucleoside + phosphate = a purine nucleobase + alpha-D-ribose 1-phosphate. The catalysed reaction is adenosine + phosphate = alpha-D-ribose 1-phosphate + adenine. It catalyses the reaction cytidine + phosphate = cytosine + alpha-D-ribose 1-phosphate. The enzyme catalyses guanosine + phosphate = alpha-D-ribose 1-phosphate + guanine. It carries out the reaction inosine + phosphate = alpha-D-ribose 1-phosphate + hypoxanthine. The catalysed reaction is thymidine + phosphate = 2-deoxy-alpha-D-ribose 1-phosphate + thymine. It catalyses the reaction uridine + phosphate = alpha-D-ribose 1-phosphate + uracil. The enzyme catalyses xanthosine + phosphate = alpha-D-ribose 1-phosphate + xanthine. In terms of biological role, catalyzes the phosphorolysis of diverse nucleosides, yielding D-ribose 1-phosphate and the respective free bases. Can use uridine, adenosine, guanosine, cytidine, thymidine, inosine and xanthosine as substrates. Also catalyzes the reverse reactions. This Methylococcus capsulatus (strain ATCC 33009 / NCIMB 11132 / Bath) protein is Pyrimidine/purine nucleoside phosphorylase.